The chain runs to 945 residues: Isoleucine--tRNA ligase (945 aa).

The 'HIGH' region signature appears at 66-76 (PYANGDIHLGH). An L-isoleucyl-5'-AMP-binding site is contributed by E581. The 'KMSKS' region motif lies at 622–626 (KMSKS). K625 is a binding site for ATP. 4 residues coordinate Zn(2+): C908, C911, C928, and C931.

This sequence belongs to the class-I aminoacyl-tRNA synthetase family. IleS type 1 subfamily. As to quaternary structure, monomer. It depends on Zn(2+) as a cofactor.

Its subcellular location is the cytoplasm. It carries out the reaction tRNA(Ile) + L-isoleucine + ATP = L-isoleucyl-tRNA(Ile) + AMP + diphosphate. In terms of biological role, catalyzes the attachment of isoleucine to tRNA(Ile). As IleRS can inadvertently accommodate and process structurally similar amino acids such as valine, to avoid such errors it has two additional distinct tRNA(Ile)-dependent editing activities. One activity is designated as 'pretransfer' editing and involves the hydrolysis of activated Val-AMP. The other activity is designated 'posttransfer' editing and involves deacylation of mischarged Val-tRNA(Ile). This Burkholderia ambifaria (strain ATCC BAA-244 / DSM 16087 / CCUG 44356 / LMG 19182 / AMMD) (Burkholderia cepacia (strain AMMD)) protein is Isoleucine--tRNA ligase.